Here is a 512-residue protein sequence, read N- to C-terminus: ATP synthase subunit alpha (512 aa).

169 to 176 contributes to the ATP binding site; sequence GDRQTGKT.

Belongs to the ATPase alpha/beta chains family. In terms of assembly, F-type ATPases have 2 components, CF(1) - the catalytic core - and CF(0) - the membrane proton channel. CF(1) has five subunits: alpha(3), beta(3), gamma(1), delta(1), epsilon(1). CF(0) has four main subunits: a(1), b(1), b'(1) and c(9-12).

The protein localises to the cell inner membrane. The enzyme catalyses ATP + H2O + 4 H(+)(in) = ADP + phosphate + 5 H(+)(out). In terms of biological role, produces ATP from ADP in the presence of a proton gradient across the membrane. The alpha chain is a regulatory subunit. The protein is ATP synthase subunit alpha of Cereibacter sphaeroides (strain ATCC 17025 / ATH 2.4.3) (Rhodobacter sphaeroides).